A 177-amino-acid chain; its full sequence is Protein GrpE (177 aa).

It belongs to the GrpE family. Homodimer.

It localises to the cytoplasm. Participates actively in the response to hyperosmotic and heat shock by preventing the aggregation of stress-denatured proteins, in association with DnaK and GrpE. It is the nucleotide exchange factor for DnaK and may function as a thermosensor. Unfolded proteins bind initially to DnaJ; upon interaction with the DnaJ-bound protein, DnaK hydrolyzes its bound ATP, resulting in the formation of a stable complex. GrpE releases ADP from DnaK; ATP binding to DnaK triggers the release of the substrate protein, thus completing the reaction cycle. Several rounds of ATP-dependent interactions between DnaJ, DnaK and GrpE are required for fully efficient folding. The chain is Protein GrpE from Thermus thermophilus (strain ATCC BAA-163 / DSM 7039 / HB27).